A 205-amino-acid polypeptide reads, in one-letter code: ATP-dependent Clp protease proteolytic subunit (205 aa).

Residue Ser-109 is the Nucleophile of the active site. His-134 is an active-site residue.

Belongs to the peptidase S14 family. In terms of assembly, fourteen ClpP subunits assemble into 2 heptameric rings which stack back to back to give a disk-like structure with a central cavity, resembling the structure of eukaryotic proteasomes.

It is found in the cytoplasm. The catalysed reaction is Hydrolysis of proteins to small peptides in the presence of ATP and magnesium. alpha-casein is the usual test substrate. In the absence of ATP, only oligopeptides shorter than five residues are hydrolyzed (such as succinyl-Leu-Tyr-|-NHMec, and Leu-Tyr-Leu-|-Tyr-Trp, in which cleavage of the -Tyr-|-Leu- and -Tyr-|-Trp bonds also occurs).. Cleaves peptides in various proteins in a process that requires ATP hydrolysis. Has a chymotrypsin-like activity. Plays a major role in the degradation of misfolded proteins. The chain is ATP-dependent Clp protease proteolytic subunit from Buchnera aphidicola subsp. Baizongia pistaciae (strain Bp).